We begin with the raw amino-acid sequence, 378 residues long: Phosphatidyl-myo-inositol mannosyltransferase (378 aa).

Residues Y9 and G16 each coordinate GDP-alpha-D-mannose. Residues Q18, 62–63, and R68 each bind a 1,2-diacyl-sn-glycero-3-phospho-(1D-myo-inositol); that span reads YN. GDP-alpha-D-mannose is bound by residues R196, 201 to 202, 251 to 253, K256, 274 to 278, and E282; these read RK, VDD, and ESFGI.

This sequence belongs to the glycosyltransferase group 1 family. In terms of assembly, monomer. Mg(2+) serves as cofactor.

It localises to the cell membrane. The enzyme catalyses a 1,2-diacyl-sn-glycero-3-phospho-(1D-myo-inositol) + GDP-alpha-D-mannose = a 1,2-diacyl-sn-glycero-3-phospho-[alpha-D-mannopyranosyl-(1&lt;-&gt;6)-D-myo-inositol] + GDP + H(+). Its pathway is phospholipid metabolism; phosphatidylinositol metabolism. Its function is as follows. Involved in the biosynthesis of phosphatidyl-myo-inositol mannosides (PIM) which are early precursors in the biosynthesis of lipomannans (LM) and lipoarabinomannans (LAM). Catalyzes the addition of a mannosyl residue from GDP-D-mannose (GDP-Man) to the position 2 of the carrier lipid phosphatidyl-myo-inositol (PI) to generate a phosphatidyl-myo-inositol bearing an alpha-1,2-linked mannose residue (PIM1). This Mycobacterium bovis (strain ATCC BAA-935 / AF2122/97) protein is Phosphatidyl-myo-inositol mannosyltransferase.